The following is a 187-amino-acid chain: Putative protein YbeM (187 aa).

The 163-residue stretch at 1–163 (MMTTILTIHV…PALIMAEVTP (163 aa)) folds into the CN hydrolase domain.

This sequence belongs to the carbon-nitrogen hydrolase superfamily. NIT1/NIT2 family.

In terms of biological role, pseudogene resulting from a nucleotide deletion that introduces a premature stop codon at position 66. This is the C-terminal fragment. The intact protein (AC A0A140NCB4) hydrolyzes deaminated glutathione (dGSH, 2-oxoglutaramate) to alpha-ketoglutarate (alpha-KG) and cysteinylglycine, has less activity against alpha-ketoglutaramate (a-KGM) and no activity on glutathione or L-glutamine. May function as a metabolite repair enzyme. The chain is Putative protein YbeM (ybeM) from Escherichia coli (strain K12).